The chain runs to 852 residues: 2-deoxy-glucose resistant protein 2 (852 aa).

Residues 1-18 show a composition bias toward polar residues; the sequence is MFKSKTSTLSYDETPNSN. Positions 1–60 are disordered; sequence MFKSKTSTLSYDETPNSNEGDRNATPVNPKEKSQTKHLNIPGDRSRHSSIADSKRSSSRY. WD repeat units lie at residues 171–210, 278–316, 318–358, 426–471, 476–515, and 651–689; these read LFKNSICCCTFSHDGKYMVIGCKDGSLHLWKVINSPVKRS, EHALDILDANWSKNGFLITASMDKTAKLWHPERKYSLKT, VHPD…VSYA, QHGP…ELFK, GSSRHRGQFLMMKNEPVVFTGSDDHWFYTWKMQSFNLSAE, and GFSSNLSNVVNNVGTILITTDSQGLIRVFRTDILPEIRK. Ser716 is subject to Phosphoserine. The tract at residues 723–748 is disordered; that stretch reads DERSSTEDNEFSTTPPSNTHNSRPSH. Residues 733 to 744 are compositionally biased toward polar residues; the sequence is FSTTPPSNTHNS.

Belongs to the WD repeat DGR2 family.

The polypeptide is 2-deoxy-glucose resistant protein 2 (DGR2) (Saccharomyces cerevisiae (strain ATCC 204508 / S288c) (Baker's yeast)).